The following is a 31-amino-acid chain: Phallacidin proprotein 1 (31 aa).

A propeptide spanning residues 1 to 10 is cleaved from the precursor; that stretch reads MSDINATRLP. Residues 11-17 constitute a cross-link (cyclopeptide (Ala-Pro)); it reads AWLVDCP. Positions 12 to 16 form a cross-link, 2'-cysteinyl-6'-hydroxytryptophan sulfoxide (Trp-Cys); it reads WLVDC. Positions 18-31 are excised as a propeptide; it reads CVGDDVNRLLTRGE.

It belongs to the MSDIN fungal toxin family. Processed by the macrocyclase-peptidase enzyme POPB to yield a toxic cyclic heptapeptide. POPB first removes 10 residues from the N-terminus. Conformational trapping of the remaining peptide forces the enzyme to release this intermediate rather than proceed to macrocyclization. The enzyme rebinds the remaining peptide in a different conformation and catalyzes macrocyclization of the N-terminal 7 residues.

Functionally, major toxin that belongs to the bicyclic heptapeptides called phallotoxins. Although structurally related to amatoxins, phallotoxins have a different mode of action, which is the stabilization of F-actin. Phallotoxins are poisonous when administered parenterally, but not orally because of poor absorption. This is Phallacidin proprotein 1 (PHA1_2) from Amanita bisporigera (Destroying angel).